Here is a 591-residue protein sequence, read N- to C-terminus: Dihydroxyacetone kinase 2 (591 aa).

In terms of domain architecture, DhaK spans 8-344 (SDGNIVTPYL…FDYPTTASGW (337 aa)). Residues 40–59 (ASAPNSGNPPKVSLVSGGGS) form a disordered region. Substrate contacts are provided by residues 58–61 (GSGH), Lys109, and Asp114. The active-site Tele-hemiaminal-histidine intermediate is the His223. The DhaL domain maps to 384–587 (DTFAKILLAG…LAALLDGFVT (204 aa)). ATP contacts are provided by residues 413-416 (DGDC), 459-460 (TS), 511-512 (TL), and 572-574 (DPG).

Belongs to the dihydroxyacetone kinase (DAK) family.

It carries out the reaction dihydroxyacetone + ATP = dihydroxyacetone phosphate + ADP + H(+). The enzyme catalyses D-glyceraldehyde + ATP = D-glyceraldehyde 3-phosphate + ADP + H(+). Its pathway is polyol metabolism; glycerol fermentation; glycerone phosphate from glycerol (oxidative route): step 2/2. Functionally, catalyzes both the phosphorylation of dihydroxyacetone and of glyceraldehyde. The chain is Dihydroxyacetone kinase 2 (DAK2) from Saccharomyces cerevisiae (strain ATCC 204508 / S288c) (Baker's yeast).